Reading from the N-terminus, the 105-residue chain is Large ribosomal subunit protein uL24 (105 aa).

It belongs to the universal ribosomal protein uL24 family. In terms of assembly, part of the 50S ribosomal subunit.

Its function is as follows. One of two assembly initiator proteins, it binds directly to the 5'-end of the 23S rRNA, where it nucleates assembly of the 50S subunit. In terms of biological role, one of the proteins that surrounds the polypeptide exit tunnel on the outside of the subunit. This chain is Large ribosomal subunit protein uL24, found in Xanthomonas oryzae pv. oryzae (strain MAFF 311018).